The sequence spans 180 residues: Aspartate 1-decarboxylase (180 aa).

The Schiff-base intermediate with substrate; via pyruvic acid role is filled by Ser-24. A Pyruvic acid (Ser) modification is found at Ser-24. Thr-56 contacts substrate. The Proton donor role is filled by Tyr-57. Residue 72–74 coordinates substrate; it reads GAA.

The protein belongs to the PanD family. As to quaternary structure, heterooctamer of four alpha and four beta subunits. Requires pyruvate as cofactor. In terms of processing, is synthesized initially as an inactive proenzyme, which is activated by self-cleavage at a specific serine bond to produce a beta-subunit with a hydroxyl group at its C-terminus and an alpha-subunit with a pyruvoyl group at its N-terminus.

The protein resides in the cytoplasm. It catalyses the reaction L-aspartate + H(+) = beta-alanine + CO2. Its pathway is cofactor biosynthesis; (R)-pantothenate biosynthesis; beta-alanine from L-aspartate: step 1/1. Catalyzes the pyruvoyl-dependent decarboxylation of aspartate to produce beta-alanine. The sequence is that of Aspartate 1-decarboxylase from Paramagnetospirillum magneticum (strain ATCC 700264 / AMB-1) (Magnetospirillum magneticum).